Reading from the N-terminus, the 244-residue chain is MTHSKTDRLYANPLAQVSQFVFDENVVDVFPDMIKRSVPGYATIINMIGNLAERYTQSGSQCYDLGCSLGAATLAMRHRIQAADCKIIGVDSSAAMLQRCAQIMAADTSDIPVDLVEARIQDVPITNASVAVLNFTLQFIPLDERQSVLNNICAGLRPNGVLILSEKLAFEDETHQQLMIDLHHNFKRANGYSDLEIAQKRTSIENYLIPETLAAHRHRLRTAGFHSVDVWFQCFNFASLIAIK.

Residues Tyr-41, 66 to 68 (GCS), Asn-134, and Arg-201 each bind S-adenosyl-L-methionine.

The protein belongs to the class I-like SAM-binding methyltransferase superfamily. Cx-SAM synthase family. As to quaternary structure, homodimer.

The enzyme catalyses prephenate + S-adenosyl-L-methionine = carboxy-S-adenosyl-L-methionine + 3-phenylpyruvate + H2O. In terms of biological role, catalyzes the conversion of S-adenosyl-L-methionine (SAM) to carboxy-S-adenosyl-L-methionine (Cx-SAM). This Cellvibrio japonicus (strain Ueda107) (Pseudomonas fluorescens subsp. cellulosa) protein is Carboxy-S-adenosyl-L-methionine synthase.